The following is a 155-amino-acid chain: Endoribonuclease YbeY (155 aa).

His-120, His-124, and His-130 together coordinate Zn(2+).

The protein belongs to the endoribonuclease YbeY family. Requires Zn(2+) as cofactor.

Its subcellular location is the cytoplasm. Its function is as follows. Single strand-specific metallo-endoribonuclease involved in late-stage 70S ribosome quality control and in maturation of the 3' terminus of the 16S rRNA. This is Endoribonuclease YbeY from Staphylococcus aureus (strain bovine RF122 / ET3-1).